The sequence spans 315 residues: Glycine--tRNA ligase alpha subunit (315 aa).

It belongs to the class-II aminoacyl-tRNA synthetase family. As to quaternary structure, tetramer of two alpha and two beta subunits.

It localises to the cytoplasm. It carries out the reaction tRNA(Gly) + glycine + ATP = glycyl-tRNA(Gly) + AMP + diphosphate. This chain is Glycine--tRNA ligase alpha subunit, found in Pseudomonas syringae pv. tomato (strain ATCC BAA-871 / DC3000).